A 323-amino-acid chain; its full sequence is ADP-ribose glycohydrolase MACROD1 (323 aa).

3 positions are modified to N6-succinyllysine: lysine 94, lysine 101, and lysine 127. Lysine 136 is covalently cross-linked (Glycyl lysine isopeptide (Lys-Gly) (interchain with G-Cter in SUMO2)). The Macro domain occupies 139 to 320 (DPKYKKDKQL…IYRERLPHYF (182 aa)). 157–159 (GDI) is a substrate binding site. Lysine 161 is subject to N6-acetyllysine. Residues 170–172 (AAN), 177–182 (GGGGVD), 265–271 (ISTGVFG), and phenylalanine 304 each bind substrate.

The protein belongs to the MacroD-type family. MacroD1/2-like subfamily. As to quaternary structure, interacts with ESR1; Interacts in a manner that is estrogen independent but is enhanced by estrogen. Interacts (via macro domain) with AR.

It localises to the nucleus. It carries out the reaction 3''-O-acetyl-ADP-D-ribose + H2O = ADP-D-ribose + acetate + H(+). The enzyme catalyses 2''-O-acetyl-ADP-D-ribose + H2O = ADP-D-ribose + acetate + H(+). The catalysed reaction is 4-O-(ADP-D-ribosyl)-L-aspartyl-[protein] + H2O = L-aspartyl-[protein] + ADP-D-ribose + H(+). It catalyses the reaction 5-O-(ADP-D-ribosyl)-L-glutamyl-[protein] + H2O = L-glutamyl-[protein] + ADP-D-ribose + H(+). It carries out the reaction alpha-NAD(+) + H2O = ADP-D-ribose + nicotinamide + H(+). With respect to regulation, subject to competitive inhibition by the product ADP-ribose. In terms of biological role, removes ADP-ribose from aspartate and glutamate residues in proteins bearing a single ADP-ribose moiety. Inactive towards proteins bearing poly-ADP-ribose. Deacetylates O-acetyl-ADP ribose, a signaling molecule generated by the deacetylation of acetylated lysine residues in histones and other proteins. Plays a role in estrogen signaling. Binds to androgen receptor (AR) and amplifies the transactivation function of AR in response to androgen. May play an important role in carcinogenesis and/or progression of hormone-dependent cancers by feed-forward mechanism that activates ESR1 transactivation. Could be an ESR1 coactivator, providing a positive feedback regulatory loop for ESR1 signal transduction. Could be involved in invasive growth by down-regulating CDH1 in endometrial cancer cells. Enhances ESR1-mediated transcription activity. The protein is ADP-ribose glycohydrolase MACROD1 of Mus musculus (Mouse).